Reading from the N-terminus, the 409-residue chain is uncharacterized protein (409 aa).

The next 4 helical transmembrane spans lie at 20–40 (ILTM…VSML), 283–303 (FALL…IGVM), 344–364 (IGGI…TVIF), and 372–392 (IPAV…FGLL).

It belongs to the ABC-4 integral membrane protein family.

The protein resides in the cell membrane. This is an uncharacterized protein from Bacillus subtilis (strain 168).